The sequence spans 514 residues: MGVCISHEYSKPTAQETEIQQQFSNFSKVDERPPMAVEHQMYDYRQAYEEQDDELFAIICCPHSIGFDRDKIALIDLDPTSDTYCTIISEIRLTSNGDEPGRMNWAKSAESLIEMDKLIRKNIIVPCMNSGKIYVIGFDKNKFYMEKSKNIFKLQEIRSDELFRKDVSCPYAVRSLPLKGAPVHVSTMGDRYGHGKGDFVLIDRKTWEIRKKSDPTFSSFGGDFSLQPRHNLLISSEWGHPRLFRDGFQPSELENVSESFGSCLHVWQISPPKLLQSIGLDSFDGSLVISVKFLHNTDCNHAFAISAIGSSIFHLHMNTLSREWQADRVAHVPSLKVENWVSDEMPALLTDMIISMDDRWLYVCGFLHGIVWRFDIQDPFRVSLHGKINLGGVFDSSPEVRIKTSNAMEDRWWLPPETRSLPRGTKFRGGPALMQLSKDGSRLYVCNSFYKAWDGQFYPELISDGGQMVRVDIVDNEMRLNKKFLVDMKDQPNGPFVIRDIKFLDGDCTSDSFL.

It belongs to the selenium-binding protein family.

This is Putative selenium-binding protein from Caenorhabditis briggsae.